The chain runs to 936 residues: Isoleucine--tRNA ligase (936 aa).

A 'HIGH' region motif is present at residues Pro58–Thr68. Glu561 contributes to the L-isoleucyl-5'-AMP binding site. A 'KMSKS' region motif is present at residues Lys602–Ser606. Residue Lys605 coordinates ATP. Residues Cys899, Cys902, Cys919, and Cys922 each coordinate Zn(2+).

Belongs to the class-I aminoacyl-tRNA synthetase family. IleS type 1 subfamily. Monomer. Zn(2+) serves as cofactor.

It localises to the cytoplasm. It catalyses the reaction tRNA(Ile) + L-isoleucine + ATP = L-isoleucyl-tRNA(Ile) + AMP + diphosphate. Catalyzes the attachment of isoleucine to tRNA(Ile). As IleRS can inadvertently accommodate and process structurally similar amino acids such as valine, to avoid such errors it has two additional distinct tRNA(Ile)-dependent editing activities. One activity is designated as 'pretransfer' editing and involves the hydrolysis of activated Val-AMP. The other activity is designated 'posttransfer' editing and involves deacylation of mischarged Val-tRNA(Ile). This Coxiella burnetii (strain Dugway 5J108-111) protein is Isoleucine--tRNA ligase.